A 156-amino-acid polypeptide reads, in one-letter code: RNA polymerase sigma factor SigS (156 aa).

Residues 29–44 carry the Polymerase core binding motif; sequence EYYQLLLIKMWQLSQI. The H-T-H motif DNA-binding region spans 126 to 145; it reads QFEIAEIMSLSLSTIKLIKM.

Belongs to the sigma-70 factor family.

Its function is as follows. Sigma factors are initiation factors that promote the attachment of RNA polymerase to specific initiation sites and are then released. Sigma-S contributes to the protection against external stress, thus playing a role in cellular fitness and survival. This chain is RNA polymerase sigma factor SigS (sigS), found in Staphylococcus aureus (strain COL).